We begin with the raw amino-acid sequence, 525 residues long: Glucose-6-phosphate isomerase (525 aa).

Catalysis depends on Glu-347, which acts as the Proton donor. Catalysis depends on residues His-378 and Lys-493.

Belongs to the GPI family.

Its subcellular location is the cytoplasm. It catalyses the reaction alpha-D-glucose 6-phosphate = beta-D-fructose 6-phosphate. It participates in carbohydrate biosynthesis; gluconeogenesis. It functions in the pathway carbohydrate degradation; glycolysis; D-glyceraldehyde 3-phosphate and glycerone phosphate from D-glucose: step 2/4. Catalyzes the reversible isomerization of glucose-6-phosphate to fructose-6-phosphate. The sequence is that of Glucose-6-phosphate isomerase from Chlamydia trachomatis serovar D (strain ATCC VR-885 / DSM 19411 / UW-3/Cx).